A 126-amino-acid chain; its full sequence is MKHLLLLTLSALLYCWVSADTRCHSCYKVPVLGCVDRQSCRLEPGHKCLTTNVYLGKMWVFSNLRCGTPEEPCREVFNETNHKLGLNYNTTCCDKDNCNSPAPRPTPALALISLTSLAGLGLWLLH.

The first 19 residues, 1 to 19, serve as a signal peptide directing secretion; the sequence is MKHLLLLTLSALLYCWVSA. The UPAR/Ly6 domain occupies 21–112; it reads TRCHSCYKVP…PRPTPALALI (92 aa). 3 cysteine pairs are disulfide-bonded: C23–C48, C26–C34, and C40–C66. A glycan (N-linked (GlcNAc...) (high mannose) asparagine) is linked at N89. Residues C93 and C98 are joined by a disulfide bond. S100 carries the GPI-anchor amidated serine lipid modification. The propeptide at 101-126 is removed in mature form; it reads PAPRPTPALALISLTSLAGLGLWLLH.

In terms of assembly, monomer. N-glycosylated. Highly expressed at the leading edges of cells, on filopodia.

The protein resides in the cell membrane. This Mus musculus (Mouse) protein is Lymphocyte antigen 6 complex locus protein G6c (Ly6g6c).